The primary structure comprises 147 residues: Cytochrome c-type biogenesis protein CcmE (147 aa).

Residues 1-9 (MKSLKKKRR) are Cytoplasmic-facing. Residues 10–30 (IQILVAAAVALVLAVGLIGYG) form a helical; Signal-anchor for type II membrane protein membrane-spanning segment. Residues 31-147 (FRDGINLYRS…EQGVYQEPNS (117 aa)) lie on the Periplasmic side of the membrane. Positions 123 and 127 each coordinate heme.

The protein belongs to the CcmE/CycJ family.

It localises to the cell inner membrane. Heme chaperone required for the biogenesis of c-type cytochromes. Transiently binds heme delivered by CcmC and transfers the heme to apo-cytochromes in a process facilitated by CcmF and CcmH. The protein is Cytochrome c-type biogenesis protein CcmE of Paracoccus denitrificans (strain Pd 1222).